A 419-amino-acid polypeptide reads, in one-letter code: MPPSEEIKLRAVSPRPDFKANYLEFANAPAIVRANQKDSYFETVLRDKLQNVIQIFKGQRFTHTHPEEIGVAAKALYLSLTTLLGTKTLGEEYVDLIYVSRDGKRIPRYLARAGFIFAYAILPYFLTRLFRRLKSSSTPKDEVTEEKINKELPISLRIEKYLSNMSYSKVLDTIMNLHIAVFYFSGQFYNISKRFFSMRYAFGHKINKERTPNGNYELLGGLIVLQLVMKSLGGFKGLIGSFTGNDEHDESNLRANNKDIMYGIPSEEEQEEAKQQLGIIDLSDPGQLPYIPESSRQCMLCLSYMTNPTAANCGHCFCWSCIIDWCKERQTVLCVGKKCWNSNCYHCIRLFYIPTLNKICFFFLLSFLSVRAASKEFKSTKEEFAELFNEELADIAGEDPHCPGPFPTGRTLGYFLVVF.

The Peroxisomal matrix segment spans residues 1 to 27 (MPPSEEIKLRAVSPRPDFKANYLEFAN). A helical membrane pass occupies residues 28 to 57 (APAIVRANQKDSYFETVLRDKLQNVIQIFK). Residue G58 is a topological domain, cytoplasmic. A helical membrane pass occupies residues 59–80 (QRFTHTHPEEIGVAAKALYLSL). The Peroxisomal matrix segment spans residues 81–108 (TTLLGTKTLGEEYVDLIYVSRDGKRIPR). The helical transmembrane segment at 109 to 141 (YLARAGFIFAYAILPYFLTRLFRRLKSSSTPKD) threads the bilayer. Topologically, residues 142–158 (EVTEEKINKELPISLRI) are cytoplasmic. The chain crosses the membrane as a helical span at residues 159 to 185 (EKYLSNMSYSKVLDTIMNLHIAVFYFS). Residues 186-215 (GQFYNISKRFFSMRYAFGHKINKERTPNGN) are Peroxisomal matrix-facing. Residues 216-235 (YELLGGLIVLQLVMKSLGGF) form a helical membrane-spanning segment. The Cytoplasmic portion of the chain corresponds to 236–419 (KGLIGSFTGN…RTLGYFLVVF (184 aa)). 8 residues coordinate Zn(2+): C298, C301, C313, H315, C318, C321, C334, and C347. Residues 298–360 (CMLCLSYMTN…FYIPTLNKIC (63 aa)) form an RING-type zinc finger.

This sequence belongs to the pex2/pex10/pex12 family. Component of the peroxisomal translocation complex, composed of at least PEX3, PEX2, PEX10 and PEX12. Interacts with PEX19.

It localises to the peroxisome membrane. It catalyses the reaction S-ubiquitinyl-[E2 ubiquitin-conjugating enzyme]-L-cysteine + [acceptor protein]-L-lysine = [E2 ubiquitin-conjugating enzyme]-L-cysteine + N(6)-ubiquitinyl-[acceptor protein]-L-lysine.. Its pathway is protein modification; protein ubiquitination. The E3 ubiquitin-protein ligase activity is stimulated by PEX12. In terms of biological role, E3 ubiquitin-protein ligase component of the peroxisomal translocation complex. The two types of peroxisomal matrix targeting signals, PTS1 and PTS2, are first recognized in the cytosol by their receptors PEX5 and PEX7, respectively, which then carry the cargo to the peroxisomal membrane. The peroxisomal targeting signal (PTS) receptor-cargo complexes interact with peroxisomal membrane protein (PMP) components of the docking complex. They have then additional downstream interactions with the translocation complex, leading to the transport of fully folded and oligomerized cargo into the peroxisome matrix. The peroxisomal translocation complex forms the retrotranslocation channel with each subunit contributing transmembrane segments that coassemble into an open channel that specifically allows the passage of PEX5 and PEX20 through the peroxisomal membrane. Specifically catalyzes monoubiquitination of PEX5 and/or PEX20 at 'Cys-6' and 'Cys-8', respectively, a modification that acts as a signal for PEX5 or PEX20 export from peroxisomes to the cytosol, thereby promoting PEX5 and PEX20 recycling. This Komagataella pastoris (Yeast) protein is Peroxisome biogenesis factor 10.